The sequence spans 226 residues: MVKGIQVAIDGPASAGKSTVAKLVAKRFGYIYCDTGAMYRSVTLAALERGIDLSQDDLVSELANQITITFAPGDPQKVFIDGHEVTQAIRSTEVAQHVSTVAAIPAVRSRMVELQRQIAQEGGIVMDGRDIGTTVLPDAPVKIFMVASAHERARRRFLDNQERGIDGGSIEELQRAIELRDQKDSTRAVSPLVKAADAYQLDTTHLTIEQVVDQIAGRIEKTLKQK.

Residue 11 to 19 (GPASAGKST) participates in ATP binding.

It belongs to the cytidylate kinase family. Type 1 subfamily.

It localises to the cytoplasm. The enzyme catalyses CMP + ATP = CDP + ADP. It catalyses the reaction dCMP + ATP = dCDP + ADP. The sequence is that of Cytidylate kinase from Limosilactobacillus fermentum (strain NBRC 3956 / LMG 18251) (Lactobacillus fermentum).